The following is a 492-amino-acid chain: Ketol-acid reductoisomerase (NADP(+)) (492 aa).

Positions 14–208 (LDQLGRCRFM…GGHKAGVLES (195 aa)) constitute a KARI N-terminal Rossmann domain. NADP(+)-binding positions include 45 to 48 (CGAQ), Arg68, Arg76, Ser78, and 108 to 110 (DKQ). The active site involves His132. Gly158 lines the NADP(+) pocket. KARI C-terminal knotted domains are found at residues 209-344 (SFVA…NAPK) and 345-485 (YDGK…MTDM). Residues Asp217, Glu221, Glu389, and Glu393 each coordinate Mg(2+). Ser414 is a binding site for substrate.

This sequence belongs to the ketol-acid reductoisomerase family. It depends on Mg(2+) as a cofactor.

The enzyme catalyses (2R)-2,3-dihydroxy-3-methylbutanoate + NADP(+) = (2S)-2-acetolactate + NADPH + H(+). It catalyses the reaction (2R,3R)-2,3-dihydroxy-3-methylpentanoate + NADP(+) = (S)-2-ethyl-2-hydroxy-3-oxobutanoate + NADPH + H(+). Its pathway is amino-acid biosynthesis; L-isoleucine biosynthesis; L-isoleucine from 2-oxobutanoate: step 2/4. The protein operates within amino-acid biosynthesis; L-valine biosynthesis; L-valine from pyruvate: step 2/4. Involved in the biosynthesis of branched-chain amino acids (BCAA). Catalyzes an alkyl-migration followed by a ketol-acid reduction of (S)-2-acetolactate (S2AL) to yield (R)-2,3-dihydroxy-isovalerate. In the isomerase reaction, S2AL is rearranged via a Mg-dependent methyl migration to produce 3-hydroxy-3-methyl-2-ketobutyrate (HMKB). In the reductase reaction, this 2-ketoacid undergoes a metal-dependent reduction by NADPH to yield (R)-2,3-dihydroxy-isovalerate. This chain is Ketol-acid reductoisomerase (NADP(+)), found in Haemophilus influenzae (strain 86-028NP).